The sequence spans 381 residues: cAMP-dependent protein kinase type I-beta regulatory subunit (381 aa).

The segment at 2 to 136 (ASPPACPSEE…ALAKAISKNV (135 aa)) is dimerization and phosphorylation. Ser3 carries the phosphoserine modification. Tyr21 is subject to 3'-nitrotyrosine. Residues 67-98 (ARQKSNSQSDSHDEEVSPTPPNPVVKARRRRG) are disordered. A phosphoserine mark is found at Ser77 and Ser83. Thr85 bears the Phosphothreonine mark. The short motif at 96 to 100 (RRGGV) is the Pseudophosphorylation motif element. Residue Arg97 is modified to Omega-N-methylarginine. 3',5'-cyclic AMP contacts are provided by residues 137–254 (LFAH…SKVS), Glu202, Arg211, 255–381 (ILES…SLTV), Glu326, and Arg335.

The protein belongs to the cAMP-dependent kinase regulatory chain family. As to quaternary structure, the inactive holoenzyme is composed of two regulatory chains and two catalytic chains. Activation by cAMP releases the two active catalytic monomers and the regulatory dimer. Interacts with PRKX; regulates this cAMP-dependent protein kinase. Interacts with C2orf88/smAKAP; this interaction may target PRKAR1B to the plasma membrane. Post-translationally, the pseudophosphorylation site binds to the substrate-binding region of the catalytic chain, resulting in the inhibition of its activity. Four types of regulatory chains are found: I-alpha, I-beta, II-alpha, and II-beta. Their expression varies among tissues and is in some cases constitutive and in others inducible.

It is found in the cell membrane. Regulatory subunit of the cAMP-dependent protein kinases involved in cAMP signaling in cells. In Homo sapiens (Human), this protein is cAMP-dependent protein kinase type I-beta regulatory subunit (PRKAR1B).